The sequence spans 80 residues: Styelin-C (80 aa).

The N-terminal stretch at Met1–Ala22 is a signal peptide. The residue at position 24 (Trp24) is a 6'-bromotryptophan. Residue Leu53 is modified to Leucine amide. A propeptide spans Asp55–Gln80 (removed in mature form).

The protein resides in the secreted. Bactericidal against several Gram-positive and Gram-negative bacteria. In Styela clava (Sea squirt), this protein is Styelin-C.